The primary structure comprises 118 residues: Small ribosomal subunit protein uS13 (118 aa).

The tract at residues 94 to 118 is disordered; that stretch reads SLPLRGQRTKTNARTRKGPRKPIRK.

The protein belongs to the universal ribosomal protein uS13 family. As to quaternary structure, part of the 30S ribosomal subunit. Forms a loose heterodimer with protein S19. Forms two bridges to the 50S subunit in the 70S ribosome.

Its function is as follows. Located at the top of the head of the 30S subunit, it contacts several helices of the 16S rRNA. In the 70S ribosome it contacts the 23S rRNA (bridge B1a) and protein L5 of the 50S subunit (bridge B1b), connecting the 2 subunits; these bridges are implicated in subunit movement. Contacts the tRNAs in the A and P-sites. This is Small ribosomal subunit protein uS13 from Shewanella halifaxensis (strain HAW-EB4).